The sequence spans 131 residues: MLSGGGGDADLANAAARGQVEAVRQLLEAGVDPNRLNRFGRRPIQVMMMGSARVAELLLLHGADPNCADPATLTRPVHDAAREGFLDTLVALHRAGGRLDVRDAWGRLPVDLAEERGHRDVARYLRATAGD.

ANK repeat units follow at residues 6–35 (GGDA…DPNR), 39–67 (FGRR…DPNC), 72–101 (TLTR…RLDV), and 105–131 (WGRL…TAGD).

Belongs to the CDKN2 cyclin-dependent kinase inhibitor family. In terms of assembly, heterodimer of CDKN2B with CDK4 or CDK6.

Its function is as follows. Interacts strongly with CDK4 and CDK6. Potent inhibitor. Potential effector of TGF-beta induced cell cycle arrest. In Bos taurus (Bovine), this protein is Cyclin-dependent kinase 4 inhibitor B (CDKN2B).